A 237-amino-acid polypeptide reads, in one-letter code: Phosphoribosylaminoimidazole-succinocarboxamide synthase (237 aa).

The protein belongs to the SAICAR synthetase family.

The enzyme catalyses 5-amino-1-(5-phospho-D-ribosyl)imidazole-4-carboxylate + L-aspartate + ATP = (2S)-2-[5-amino-1-(5-phospho-beta-D-ribosyl)imidazole-4-carboxamido]succinate + ADP + phosphate + 2 H(+). It participates in purine metabolism; IMP biosynthesis via de novo pathway; 5-amino-1-(5-phospho-D-ribosyl)imidazole-4-carboxamide from 5-amino-1-(5-phospho-D-ribosyl)imidazole-4-carboxylate: step 1/2. The chain is Phosphoribosylaminoimidazole-succinocarboxamide synthase from Serratia proteamaculans (strain 568).